A 176-amino-acid chain; its full sequence is Disulfide bond formation protein B (176 aa).

Residues 1 to 14 (MMRSLNRCSKHRAA) lie on the Cytoplasmic side of the membrane. A helical transmembrane segment spans residues 15–31 (WLLLALTTFSLELVALY). Over 32–49 (FQHVMLLKPCVLCVYQRC) the chain is Periplasmic. A disulfide bridge links Cys-41 with Cys-44. A helical membrane pass occupies residues 50–65 (ALYGVVAAGLVGAIAP). The Cytoplasmic segment spans residues 66 to 71 (ATPLRF). The chain crosses the membrane as a helical span at residues 72 to 89 (SGLAIWLYSAWEGLQLAM). Residues 90 to 144 (KHTDIQLHPSPFVTCDFFVSFPAWLPLDKWLPSVFSASGDCAVRQWHFLSLEMPQ) are Periplasmic-facing. Cys-104 and Cys-130 form a disulfide bridge. A helical transmembrane segment spans residues 145–163 (WMIVIFGAYLAVAVLILLA). Over 164–176 (QFFPPRKRDLFSR) the chain is Cytoplasmic.

Belongs to the DsbB family.

The protein resides in the cell inner membrane. Its function is as follows. Required for disulfide bond formation in some periplasmic proteins. Acts by oxidizing the DsbA protein. This is Disulfide bond formation protein B from Sodalis glossinidius (strain morsitans).